Consider the following 818-residue polypeptide: Serine/threonine-protein phosphatase 4 regulatory subunit 3 (818 aa).

Positions 1–100 (MTDTRRRVKV…DEIWEKICQV (100 aa)) constitute a WH1 domain. The tract at residues 718–818 (LAKSSFSGRQ…PPSKKSRLSS (101 aa)) is disordered. A compositionally biased stretch (polar residues) spans 721-730 (SSFSGRQNPS). Over residues 736-756 (SGSTKTSLSSPPPSASLSPGS) the composition is skewed to low complexity. A compositionally biased stretch (acidic residues) spans 788–804 (YPDDDEEEEDDDDEESK).

The protein belongs to the SMEK family. In terms of assembly, serine/threonine-protein phosphatase 4 (PP4) occurs in different assemblies of the catalytic and one or more regulatory subunits.

Its function is as follows. Regulatory subunit of serine/threonine-protein phosphatase 4. The protein is Serine/threonine-protein phosphatase 4 regulatory subunit 3 (smek1) of Tetraodon nigroviridis (Spotted green pufferfish).